Here is a 346-residue protein sequence, read N- to C-terminus: Biotin synthase (346 aa).

Positions 38–256 (QQVQVSTLLS…IAVARIMMPT (219 aa)) constitute a Radical SAM core domain. The [4Fe-4S] cluster site is built by cysteine 53, cysteine 57, and cysteine 60. Positions 97, 128, 188, and 260 each coordinate [2Fe-2S] cluster.

Belongs to the radical SAM superfamily. Biotin synthase family. Homodimer. Requires [4Fe-4S] cluster as cofactor. [2Fe-2S] cluster serves as cofactor.

The enzyme catalyses (4R,5S)-dethiobiotin + (sulfur carrier)-SH + 2 reduced [2Fe-2S]-[ferredoxin] + 2 S-adenosyl-L-methionine = (sulfur carrier)-H + biotin + 2 5'-deoxyadenosine + 2 L-methionine + 2 oxidized [2Fe-2S]-[ferredoxin]. The protein operates within cofactor biosynthesis; biotin biosynthesis; biotin from 7,8-diaminononanoate: step 2/2. Functionally, catalyzes the conversion of dethiobiotin (DTB) to biotin by the insertion of a sulfur atom into dethiobiotin via a radical-based mechanism. In Salmonella newport (strain SL254), this protein is Biotin synthase.